Consider the following 727-residue polypeptide: MNQSRSFVTGRGRDLSRTPSALSSNSETPGSMSSPSEGKTNAWVNSAYVSNFPALGQSQGLPSHKCSALALRSSQTTYIINFPRQHWNIMTFPNQSEAILATVASYAKDLDGKNSFAVFDTLKMPWSCRLGEKSCSGIDTLGHLADVHMHVLDPAEAEGKNLSDSETVYVYVTPPNLTDVKPTTIVLTECAANAKSANDLRQYIVTQLRKMPSLPFGCTTYAPGFLSDGVCKEHPNLFTSEELGAKIKVLTKLLIRCATSMSQDGSNAFCPKHPKVKIVHESNATSYILFNRPNGMVATNLILSDLPDDDCPTCWILKLAISEARYYALDGHHRCRSRIITPSVFRYLASIVIRVSMDSVLAPSDASSTDHAALVNMMCGIIQNTPAMRHVGISTGSEKVNNRSMRVIIMQENADRATQMSALYHLFLDYFGALNGWGFYFCSLTSLYGEFHGFSVGFSGEITHVNVASVIAKNWDTQSGIDNILEFKTITIPVHNEDIVCMVERTLAESFEVVINEHFNGASTIKVRRNGGDSRFNFTISNPRDAFLLLQKAVVDGGILQKILCRAMLKAIASLALRADREVQDVSFSFVLKMSLNPVNKSDPKSSELAHAAQMNSLPEFLASTPFTMQLGTLRDALLKKTGNVTVINMARTTEEVSNDALQEILKSIGGNSMTLDDPAEPLSDIESIPDPPPRSWASEDEAVNSPQTYSSRRKARKARAASKLSK.

Disordered regions lie at residues 1–38 (MNQS…PSEG) and 671–727 (GNSM…KLSK). Residues 17–38 (RTPSALSSNSETPGSMSSPSEG) show a composition bias toward polar residues. The span at 712-727 (SRRKARKARAASKLSK) shows a compositional bias: basic residues.

The polypeptide is Non-structural protein 4 (Rice dwarf virus (isolate Fujian) (RDV)).